Reading from the N-terminus, the 273-residue chain is Dermonecrotic toxin LdSicTox-alphaIB3aiii (273 aa).

His-5 is a catalytic residue. Residues Glu-25 and Asp-27 each coordinate Mg(2+). Catalysis depends on His-41, which acts as the Nucleophile. 2 disulfide bridges follow: Cys-45–Cys-51 and Cys-47–Cys-190. Mg(2+) is bound at residue Asp-85.

It belongs to the arthropod phospholipase D family. Class II subfamily. Mg(2+) is required as a cofactor. In terms of tissue distribution, expressed by the venom gland.

It localises to the secreted. It carries out the reaction an N-(acyl)-sphingosylphosphocholine = an N-(acyl)-sphingosyl-1,3-cyclic phosphate + choline. The catalysed reaction is an N-(acyl)-sphingosylphosphoethanolamine = an N-(acyl)-sphingosyl-1,3-cyclic phosphate + ethanolamine. It catalyses the reaction a 1-acyl-sn-glycero-3-phosphocholine = a 1-acyl-sn-glycero-2,3-cyclic phosphate + choline. The enzyme catalyses a 1-acyl-sn-glycero-3-phosphoethanolamine = a 1-acyl-sn-glycero-2,3-cyclic phosphate + ethanolamine. Functionally, dermonecrotic toxins cleave the phosphodiester linkage between the phosphate and headgroup of certain phospholipids (sphingolipid and lysolipid substrates), forming an alcohol (often choline) and a cyclic phosphate. This toxin acts on sphingomyelin (SM). It may also act on ceramide phosphoethanolamine (CPE), lysophosphatidylcholine (LPC) and lysophosphatidylethanolamine (LPE), but not on lysophosphatidylserine (LPS), and lysophosphatidylglycerol (LPG). It acts by transphosphatidylation, releasing exclusively cyclic phosphate products as second products. Induces dermonecrosis, hemolysis, increased vascular permeability, edema, inflammatory response, and platelet aggregation. The chain is Dermonecrotic toxin LdSicTox-alphaIB3aiii from Loxosceles deserta (Desert recluse spider).